We begin with the raw amino-acid sequence, 583 residues long: Complement factor I (583 aa).

Residues 1–18 form the signal peptide; sequence MKLLHVFLLFLCFHLSFC. 16 disulfides stabilise this stretch: cysteine 33-cysteine 255, cysteine 43-cysteine 54, cysteine 48-cysteine 59, cysteine 61-cysteine 93, cysteine 67-cysteine 86, cysteine 75-cysteine 106, cysteine 141-cysteine 181, cysteine 154-cysteine 214, cysteine 186-cysteine 196, cysteine 229-cysteine 247, cysteine 259-cysteine 271, cysteine 266-cysteine 284, cysteine 278-cysteine 293, cysteine 327-cysteine 453, cysteine 365-cysteine 381, and cysteine 373-cysteine 444. Residues 55 to 108 enclose the Kazal-like domain; that stretch reads IEGTCICKLPYQCPKNGTTVCATNGRSFPTYCQQKSLECLRPGTKFLNNGTCTA. N-linked (GlcNAc...) asparagine glycans are attached at residues asparagine 70, asparagine 103, asparagine 173, and asparagine 177. One can recognise an SRCR domain in the interval 114-212; it reads VSLKHGNTDS…TMGYQDLADV (99 aa). 2 LDL-receptor class A domains span residues 213 to 257 and 258 to 294; these read VCYT…LCCK and ACQG…VGCE. Residues lysine 239, aspartate 242, isoleucine 244, aspartate 246, aspartate 252, and glutamate 253 each coordinate Ca(2+). Residues tyrosine 276, asparagine 279, glutamate 281, aspartate 283, aspartate 289, and glutamate 290 each contribute to the Ca(2+) site. One can recognise a Peptidase S1 domain in the interval 340-574; that stretch reads IVGGKRAQLG…YFDWISYHVG (235 aa). Catalysis depends on charge relay system residues histidine 380 and aspartate 429. Asparagine 464 and asparagine 494 each carry an N-linked (GlcNAc...) asparagine glycan. 3 disulfide bridges follow: cysteine 467/cysteine 531, cysteine 495/cysteine 510, and cysteine 521/cysteine 550. The active-site Charge relay system is serine 525. The N-linked (GlcNAc...) asparagine glycan is linked to asparagine 536.

Belongs to the peptidase S1 family. As to quaternary structure, heterodimer of a light and heavy chains; disulfide-linked. The fully processed and mature protein circulates as a zymogen, and is allosterically activated by substrate-induced remodeling of the active site. As to expression, plasma.

Its subcellular location is the secreted. It is found in the extracellular space. It catalyses the reaction Inactivates complement subcomponents C3b, iC3b and C4b by proteolytic cleavage.. Functionally, responsible for cleaving the alpha-chains of C4b and C3b in the presence of the cofactors C4-binding protein and factor H respectively. This Pongo abelii (Sumatran orangutan) protein is Complement factor I (CFI).